Reading from the N-terminus, the 109-residue chain is Nucleoid-associated protein plu3840 (109 aa).

Disordered stretches follow at residues 1 to 23 (MFGKGGLGNLMKQAQQMQDKMQK) and 89 to 109 (KEKMAGISSGMQLPPGFKMPF).

This sequence belongs to the YbaB/EbfC family. Homodimer.

The protein resides in the cytoplasm. It localises to the nucleoid. Its function is as follows. Binds to DNA and alters its conformation. May be involved in regulation of gene expression, nucleoid organization and DNA protection. This Photorhabdus laumondii subsp. laumondii (strain DSM 15139 / CIP 105565 / TT01) (Photorhabdus luminescens subsp. laumondii) protein is Nucleoid-associated protein plu3840.